The sequence spans 397 residues: Phosphoglycerate kinase (397 aa).

Substrate-binding positions include 21 to 23 (DFN), Arg-36, 59 to 62 (HLGR), Arg-119, and Arg-156. Residues Lys-207, Gly-295, Glu-326, and 353–356 (GGDS) each bind ATP.

Belongs to the phosphoglycerate kinase family. As to quaternary structure, monomer.

The protein localises to the cytoplasm. The enzyme catalyses (2R)-3-phosphoglycerate + ATP = (2R)-3-phospho-glyceroyl phosphate + ADP. The protein operates within carbohydrate degradation; glycolysis; pyruvate from D-glyceraldehyde 3-phosphate: step 2/5. The sequence is that of Phosphoglycerate kinase from Enterococcus faecalis (strain ATCC 700802 / V583).